Here is a 283-residue protein sequence, read N- to C-terminus: Probable protein phosphatase 2C 58 (283 aa).

The 248-residue stretch at Thr35–Phe282 folds into the PPM-type phosphatase domain. Mn(2+) is bound by residues Asp72, Gly73, Asp234, and Asp273.

This sequence belongs to the PP2C family. Requires Mg(2+) as cofactor. Mn(2+) is required as a cofactor.

It carries out the reaction O-phospho-L-seryl-[protein] + H2O = L-seryl-[protein] + phosphate. The catalysed reaction is O-phospho-L-threonyl-[protein] + H2O = L-threonyl-[protein] + phosphate. The sequence is that of Probable protein phosphatase 2C 58 from Arabidopsis thaliana (Mouse-ear cress).